The primary structure comprises 351 residues: Tryptophan--tRNA ligase (351 aa).

ATP-binding positions include 11–13 and 19–20; these read RPT and GH. The 'HIGH' region signature appears at 12–20; that stretch reads PTGALHLGH. L-tryptophan is bound at residue aspartate 139. ATP-binding positions include 151–153, leucine 190, and 198–202; these read GRD and KMSKS. A 'KMSKS' region motif is present at residues 198 to 202; sequence KMSKS.

It belongs to the class-I aminoacyl-tRNA synthetase family. Homodimer.

It localises to the cytoplasm. The catalysed reaction is tRNA(Trp) + L-tryptophan + ATP = L-tryptophyl-tRNA(Trp) + AMP + diphosphate + H(+). In terms of biological role, catalyzes the attachment of tryptophan to tRNA(Trp). The protein is Tryptophan--tRNA ligase of Borreliella burgdorferi (strain ATCC 35210 / DSM 4680 / CIP 102532 / B31) (Borrelia burgdorferi).